The primary structure comprises 100 residues: Large ribosomal subunit protein eL36A (100 aa).

Thr-2 is modified (N-acetylthreonine).

This sequence belongs to the eukaryotic ribosomal protein eL36 family. Component of the large ribosomal subunit (LSU). Mature yeast ribosomes consist of a small (40S) and a large (60S) subunit. The 40S small subunit contains 1 molecule of ribosomal RNA (18S rRNA) and 33 different proteins (encoded by 57 genes). The large 60S subunit contains 3 rRNA molecules (25S, 5.8S and 5S rRNA) and 46 different proteins (encoded by 81 genes). Post-translationally, N-terminally acetylated by acetyltransferase NatA.

The protein resides in the cytoplasm. Its function is as follows. Component of the ribosome, a large ribonucleoprotein complex responsible for the synthesis of proteins in the cell. The small ribosomal subunit (SSU) binds messenger RNAs (mRNAs) and translates the encoded message by selecting cognate aminoacyl-transfer RNA (tRNA) molecules. The large subunit (LSU) contains the ribosomal catalytic site termed the peptidyl transferase center (PTC), which catalyzes the formation of peptide bonds, thereby polymerizing the amino acids delivered by tRNAs into a polypeptide chain. The nascent polypeptides leave the ribosome through a tunnel in the LSU and interact with protein factors that function in enzymatic processing, targeting, and the membrane insertion of nascent chains at the exit of the ribosomal tunnel. This is Large ribosomal subunit protein eL36A from Saccharomyces cerevisiae (strain ATCC 204508 / S288c) (Baker's yeast).